We begin with the raw amino-acid sequence, 43 residues long: MATKSDEPVFYPVFTVRWLAVHTLAIPTVFFLGAIAAMQFIQR.

Residues 18–34 (WLAVHTLAIPTVFFLGA) traverse the membrane as a helical segment. Histidine 22 provides a ligand contact to heme.

Belongs to the PsbE/PsbF family. In terms of assembly, heterodimer of an alpha subunit and a beta subunit. PSII is composed of 1 copy each of membrane proteins PsbA, PsbB, PsbC, PsbD, PsbE, PsbF, PsbH, PsbI, PsbJ, PsbK, PsbL, PsbM, PsbT, PsbX, PsbY, PsbZ, Psb30/Ycf12, peripheral proteins PsbO, CyanoQ (PsbQ), PsbU, PsbV and a large number of cofactors. It forms dimeric complexes. The cofactor is heme b.

The protein localises to the cellular thylakoid membrane. In terms of biological role, this b-type cytochrome is tightly associated with the reaction center of photosystem II (PSII). PSII is a light-driven water:plastoquinone oxidoreductase that uses light energy to abstract electrons from H(2)O, generating O(2) and a proton gradient subsequently used for ATP formation. It consists of a core antenna complex that captures photons, and an electron transfer chain that converts photonic excitation into a charge separation. This Synechococcus sp. (strain JA-2-3B'a(2-13)) (Cyanobacteria bacterium Yellowstone B-Prime) protein is Cytochrome b559 subunit beta.